Reading from the N-terminus, the 724-residue chain is MKSAKGIENLAFVPSSPDILRRLSASPSQIEVSALSSDPQRENSQPQELQKPQEPQKSPEPSLPSAPPNVSEEKLRSLSLSEFEEGSYGWRNFHPQCLQRCNTPGGFLLHYCLLAVTQGIVVNGLVNISISTVEKRYEMKSSLTGLISSSYDISFCLLSLFVSFFGERGHKPRWLAFAAFMIGLGALVFSLPQFFSGEYKLGSLFEDTCVTTRNSTSCTSSTSSLSNYLYVFILGQLLLGAGGTPLYTLGTAFLDDSVPTHKSSLYIGTGYAMSILGPAIGYVLGGQLLTIYIDVAMGESTDVTEDDPRWLGAWWIGFLLSWIFAWSLIIPFSCFPKHLPGTAEIQAGKTSQAHQSNSNADVKFGKSIKDFPAALKNLMKNAVFMCLVLSTSSEALITTGFATFLPKFIENQFGLTSSFAATLGGAVLIPGAALGQILGGFLVSKFRMTCKNTMKFALFTSGVALTLSFVFMYAKCENEPFAGVSESYNGTGELGNLIAPCNANCNCSRSYYYPVCGDGVQYFSPCFAGCSNPVAHRKPKVYYNCSCIERKTEITSTAETFGFEAKAGKCETHCAKLPIFLCIFFIVIIFTFMAGTPITVSILRCVNHRQRSLALGIQFMVLRLLGTIPGPIIFGFTIDSTCILWDINDCGIKGACWIYDNIKMAHMLVAISVTCKVITMFFNGFAIFLYKPPPSATDVSFHKENAVVTNVLAEQDLNKIVKEG.

Residues 1-105 (MKSAKGIENL…QCLQRCNTPG (105 aa)) lie on the Cytoplasmic side of the membrane. Residues serine 15, serine 16, serine 24, serine 26, and serine 28 each carry the phosphoserine modification. A disordered region spans residues 30-71 (IEVSALSSDPQRENSQPQELQKPQEPQKSPEPSLPSAPPNVS). Residues 44-60 (SQPQELQKPQEPQKSPE) are compositionally biased toward low complexity. The chain crosses the membrane as a helical span at residues 106–126 (GFLLHYCLLAVTQGIVVNGLV). Residues 127–145 (NISISTVEKRYEMKSSLTG) lie on the Extracellular side of the membrane. Residues 146–166 (LISSSYDISFCLLSLFVSFFG) traverse the membrane as a helical segment. At 167–172 (ERGHKP) the chain is on the cytoplasmic side. The helical transmembrane segment at 173 to 197 (RWLAFAAFMIGLGALVFSLPQFFSG) threads the bilayer. Residues 198 to 223 (EYKLGSLFEDTCVTTRNSTSCTSSTS) are Extracellular-facing. Residues 224-254 (SLSNYLYVFILGQLLLGAGGTPLYTLGTAFL) traverse the membrane as a helical segment. At 255 to 274 (DDSVPTHKSSLYIGTGYAMS) the chain is on the cytoplasmic side. Residues 275–295 (ILGPAIGYVLGGQLLTIYIDV) form a helical membrane-spanning segment. Residues 296–311 (AMGESTDVTEDDPRWL) lie on the Extracellular side of the membrane. Residues 312 to 336 (GAWWIGFLLSWIFAWSLIIPFSCFP) form a helical membrane-spanning segment. The Cytoplasmic segment spans residues 337-377 (KHLPGTAEIQAGKTSQAHQSNSNADVKFGKSIKDFPAALKN). Residues 378 to 399 (LMKNAVFMCLVLSTSSEALITT) form a helical membrane-spanning segment. Over 400 to 419 (GFATFLPKFIENQFGLTSSF) the chain is Extracellular. Residues 420–443 (AATLGGAVLIPGAALGQILGGFLV) form a helical membrane-spanning segment. At 444–447 (SKFR) the chain is on the cytoplasmic side. Residues 448–471 (MTCKNTMKFALFTSGVALTLSFVF) traverse the membrane as a helical segment. Topologically, residues 472–580 (MYAKCENEPF…ETHCAKLPIF (109 aa)) are extracellular. One can recognise a Kazal-like domain in the interval 495–549 (GNLIAPCNANCNCSRSYYYPVCGDGVQYFSPCFAGCSNPVAHRKPKVYYNCSCIE). Intrachain disulfides connect cysteine 501–cysteine 530, cysteine 507–cysteine 526, and cysteine 516–cysteine 547. The helical transmembrane segment at 581 to 603 (LCIFFIVIIFTFMAGTPITVSIL) threads the bilayer. The Cytoplasmic portion of the chain corresponds to 604–612 (RCVNHRQRS). A helical membrane pass occupies residues 613 to 638 (LALGIQFMVLRLLGTIPGPIIFGFTI). Topologically, residues 639-672 (DSTCILWDINDCGIKGACWIYDNIKMAHMLVAIS) are extracellular. Residues 673–690 (VTCKVITMFFNGFAIFLY) traverse the membrane as a helical segment. Over 691–724 (KPPPSATDVSFHKENAVVTNVLAEQDLNKIVKEG) the chain is Cytoplasmic.

The protein belongs to the organo anion transporter (TC 2.A.60) family. As to expression, predominantly expressed in kidney but also weakly expressed in both fetal liver and kidney.

It is found in the basolateral cell membrane. The enzyme catalyses estrone 3-sulfate(out) = estrone 3-sulfate(in). It carries out the reaction L-thyroxine(out) = L-thyroxine(in). It catalyses the reaction 3,3',5-triiodo-L-thyronine(out) = 3,3',5-triiodo-L-thyronine(in). The catalysed reaction is chenodeoxycholate(out) = chenodeoxycholate(in). The enzyme catalyses glycocholate(out) = glycocholate(in). It carries out the reaction L-homoarginine(in) = L-homoarginine(out). It catalyses the reaction L-arginine(in) = L-arginine(out). The catalysed reaction is N(omega),N(omega)-dimethyl-L-arginine(out) = N(omega),N(omega)-dimethyl-L-arginine(in). Functionally, mediates the transport of organic anions such as steroids (estrone 3-sulfate, chenodeoxycholate, glycocholate) and thyroid hormones (3,3',5-triiodo-L-thyronine (T3), L-thyroxine (T4)), in the kidney. Capable of transporting cAMP and pharmacological substances such as digoxin, ouabain and methotrexate. Transport is independent of sodium, chloride ion, and ATP. Transport activity is stimulated by an acidic extracellular environment due to increased substrate affinity to the transporter. The driving force for this transport activity is currently not known. The role of hydrogencarbonate (HCO3(-), bicarbonate) as the probable counteranion that exchanges for organic anions is still not well defined. Functions as an uptake transporter at the apical membrane, suggesting a role in renal reabsorption. Involved in the renal secretion of the uremic toxin ADMA (N(omega),N(omega)-dimethyl-L-arginine or asymmetrical dimethylarginine), which is associated to cardiovascular events and mortality, and the structurally related amino acids L-arginine and L-homoarginine (a cardioprotective biomarker). Can act bidirectionally, suggesting a dual protective role of this transport protein; exporting L-homoarginine after being synthesized in proximal tubule cells, and mediating uptake of ADMA from the blood into proximal tubule cells where it is degraded by the enzyme dimethylarginine dimethylaminohydrolase 1 (DDAH1). May be involved in sperm maturation by enabling directed movement of organic anions and compounds within or between cells. This ion-transporting process is important to maintain the strict epididymal homeostasis necessary for sperm maturation. May have a role in secretory functions since seminal vesicle epithelial cells are assumed to secrete proteins involved in decapacitation by modifying surface proteins to facilitate the acquisition of the ability to fertilize the egg. The protein is Solute carrier organic anion transporter family member 4C1 of Homo sapiens (Human).